Reading from the N-terminus, the 292-residue chain is Medium chain reductase/dehydrogenase ucsI (292 aa).

Cys43 lines the Zn(2+) pocket. Tyr49 lines the substrate pocket. 2 residues coordinate Zn(2+): His65 and Glu66. NAD(+)-binding positions include 184–189, Asp208, Arg213, and 276–278; these read GCGPVG and IGA.

This sequence belongs to the zinc-containing alcohol dehydrogenase family. Requires Zn(2+) as cofactor.

It participates in mycotoxin biosynthesis. In terms of biological role, medium chain reductase/dehydrogenase; part of the gene cluster that mediates the biosynthesis of UCS1025A, a member of the pyrrolizidinone family that acts as a strong telomerase inhibitor and displays potent antibacterial and antitumor properties. These compounds share a hemiaminal-containing pyrrolizidinone core fused with a gamma-lactone, giving a furopyrrolizidine that is connected to a decalin fragment. The polyketide synthase module (PKS) of the PKS-NRPS ucsA is responsible for the synthesis of the polyketide backbone via the condensation of an acetyl-CoA starter unit with 6 malonyl-CoA units. The downstream nonribosomal peptide synthetase (NRPS) module then amidates the carboxyl end of the polyketide with a 2S,3S-methylproline derived from L-isoleucine by the 2-oxoglutarate-dependent dioxygenase ucsF which converts L-isoleucine to (4S,5S)-4-methylpyrroline-5-carboxylate that is further converted to 2S,3S-methylproline by the pyrroline-5-carboxylate reductase ucsG. Reductive release of the completed aminoacyl polyketide from the assembly line can form the 3-pyrrolin-2-one structure via an intramolecular Knoevenagel reaction. Because ucsA lacks a designated enoylreductase (ER) domain, the required activity is provided the enoyl reductase ucsL. This keto acyclic precursor is the substrate of the Diels-Alderase ucsH, that catalyzes the Diels-Alder cycloaddition. Oxidation of the 3S-methyl group to a carboxylate by the cytochrome P450 monooxygenase ucsK allows an oxa-Michael cyclization that might involve the reductase/dehydrogenase ucsI and which furnishes the furopyrrolizidine. The oxidase ucsJ likely plays a critical role in stereoselective reduction of the C5-C6 double bond to afford the required R-configured carboxylate group. Further enolization and oxidation at C5 by an unidentified enzyme affords the last intermediate that can undergo oxa-Michael cyclization to yield UCS1025A. This is Medium chain reductase/dehydrogenase ucsI from Acremonium sp.